Reading from the N-terminus, the 617-residue chain is Electron transfer flavoprotein-ubiquinone oxidoreductase, mitochondrial (617 aa).

The transit peptide at 1–33 (MLVPLAKLSCLAYQCFHALKIKKNYLPLCATRW) directs the protein to the mitochondrion. 71–85 (VVIVGAGPAGLSAAV) serves as a coordination point for FAD. N6-acetyllysine is present on Lys-96. An intramembrane segment occupies 109–130 (IGAHTLSGACLDPGAFKELFPD). An N6-acetyllysine mark is found at Lys-132 and Lys-223. Residues Gly-305 and Gly-306 each coordinate a ubiquinone. The residue at position 357 (Lys-357) is an N6-acetyllysine. The stretch at 428–447 (IGLHVTEYEDNLKNSWVWKE) is an intramembrane region. The residue at position 551 (Ser-551) is a Phosphoserine. Positions 561, 586, 589, and 592 each coordinate [4Fe-4S] cluster. Residues 577–606 (FRLQINAQNCVHCKTCDIKDPSQNINWVVP) form the 4Fe-4S ferredoxin-type domain.

Belongs to the ETF-QO/FixC family. Monomer. The cofactor is [4Fe-4S] cluster. FAD serves as cofactor.

The protein resides in the mitochondrion inner membrane. It catalyses the reaction a ubiquinone + reduced [electron-transfer flavoprotein] = a ubiquinol + oxidized [electron-transfer flavoprotein] + H(+). Its function is as follows. Accepts electrons from ETF and reduces ubiquinone. The polypeptide is Electron transfer flavoprotein-ubiquinone oxidoreductase, mitochondrial (Homo sapiens (Human)).